We begin with the raw amino-acid sequence, 244 residues long: uncharacterized protein (244 aa).

One can recognise a WGR domain in the interval 1–78 (MKKRFIYHDE…PKFNFMDRYY (78 aa)).

This is an uncharacterized protein from Escherichia coli (strain K12).